Reading from the N-terminus, the 320-residue chain is Lactamase-like protein GME11357 (320 aa).

Zn(2+) contacts are provided by histidine 106, histidine 108, aspartate 110, and histidine 111. The active-site Proton donor/acceptor is aspartate 110.

It belongs to the metallo-beta-lactamase superfamily. Requires Zn(2+) as cofactor.

It functions in the pathway secondary metabolite biosynthesis. Functionally, lactamase-like protein; part of the gene cluster that mediates the biosynthesis of dibenzodioxocinones such as pestalotiollide B, a novel class of inhibitors against cholesterol ester transfer protein (CEPT). The biosynthesis initiates from condensation of acetate and malonate units catalyzed by the non-reducing PKS pks8/GME11356. Pks8/GME11356 lacks a thioesterase (TE) domain, which is important to the cyclizing of the third ring of atrochrysone carboxylic acid, and the esterase GME11355 might play the role of TE and catalyzes the cyclization reaction of the C ring. The lactamase-like protein GME11357 (or other beta-lactamases in Pestalotiopsis microspora) probably hydrolyzes the thioester bond between the ACP of pks8/GME11356 and the intermediate to release atrochrysone carboxylic acid, which is spontaneously dehydrates to form endocrocin anthrone. Endocrocin anthrone is further converted to emodin via the endocrocin intermediate. Emodin is then oxidized by several enzymes such as the Baeyer-Villiger oxidase GME11358, the oxidoreductase GME11367, the short chain dehydrogenase/reductase GME11373, as well as by other oxidoreductases from the cluster, to modify the A and C rings and open the B ring, and finally yield monodictyphenone. The prenyltransferase GME11375 may catalyze the addition reaction between the C5 side chains and the carbon bone of dibenzodioxocinones. The remaining biochemical reactions to the final product dibenzodioxocinones should be methylation catalyzed by methyltransferase GME11366 and reduction and lactonization reaction catalyzed by a series of oxidordeuctases. This is Lactamase-like protein GME11357 from Pestalotiopsis microspora.